The primary structure comprises 203 residues: MAEGQVLVLDGRGHLLGRLAAIVAKQVLLGRKVVVVRCEGINISGNFYRNKLNYLAFLRKRMNTNPSRGPYDFRAPSRIFWRTVRGMLPHKTKRGQAALDRLKVFDGIPPPYDKKKRMVVPAALKVVRLKPTRKFAYLGRLAHEVGWKYQAVTATLEEKRKEKAKIHYRKKKQLMRLRKQAEKNVEKKIDKYTEVLKTHGLLV.

An N-acetylalanine modification is found at Ala-2. Arg-59 is subject to Citrulline. Ser-77 is subject to Phosphoserine. Citrulline is present on Arg-140. At Lys-191 the chain carries N6-acetyllysine.

It belongs to the universal ribosomal protein uL13 family. Component of the 60S ribosome. Component of the GAIT complex. Interacts with EIF4G1. In terms of processing, phosphorylation at Ser-77 upon interferon-gamma treatment in macrophages involves a DAPK1-DAPK3 kinase cascade and is causing release from the ribosome, association with the GAIT complex and subsequent involvement in transcript-selective translation inhibition. Post-translationally, citrullinated by PADI4.

It is found in the cytoplasm. Its function is as follows. Associated with ribosomes but is not required for canonical ribosome function and has extra-ribosomal functions. Component of the GAIT (gamma interferon-activated inhibitor of translation) complex which mediates interferon-gamma-induced transcript-selective translation inhibition in inflammation processes. Upon interferon-gamma activation and subsequent phosphorylation dissociates from the ribosome and assembles into the GAIT complex which binds to stem loop-containing GAIT elements in the 3'-UTR of diverse inflammatory mRNAs (such as ceruplasmin) and suppresses their translation. In the GAIT complex interacts with m7G cap-bound eIF4G at or near the eIF3-binding site and blocks the recruitment of the 43S ribosomal complex. Involved in methylation of rRNA. This chain is Large ribosomal subunit protein uL13 (RPL13A), found in Canis lupus familiaris (Dog).